Reading from the N-terminus, the 556-residue chain is Urocanate hydratase (556 aa).

NAD(+)-binding positions include 52 to 53 (GG), Q130, 176 to 178 (GMG), E196, R201, 242 to 243 (NA), 263 to 267 (QTSAH), 273 to 274 (YL), and Y322. Residue C410 is part of the active site. G492 contacts NAD(+).

It belongs to the urocanase family. It depends on NAD(+) as a cofactor.

It localises to the cytoplasm. It catalyses the reaction 4-imidazolone-5-propanoate = trans-urocanate + H2O. It functions in the pathway amino-acid degradation; L-histidine degradation into L-glutamate; N-formimidoyl-L-glutamate from L-histidine: step 2/3. Functionally, catalyzes the conversion of urocanate to 4-imidazolone-5-propionate. In Shewanella woodyi (strain ATCC 51908 / MS32), this protein is Urocanate hydratase.